A 54-amino-acid chain; its full sequence is Large ribosomal subunit protein bL33 (54 aa).

Belongs to the bacterial ribosomal protein bL33 family.

This Rhodopirellula baltica (strain DSM 10527 / NCIMB 13988 / SH1) protein is Large ribosomal subunit protein bL33.